We begin with the raw amino-acid sequence, 96 residues long: MEKTSLKLVFLFSLTVIALCLSLSAAREMAKEEVNCIGGHCPDGKKDCNCLPLIAPTMDIYETNESCRTDNECIKYCPKGCKIVDCNFGTCLCEYC.

An N-terminal signal peptide occupies residues 1–26 (MEKTSLKLVFLFSLTVIALCLSLSAA). Disulfide bonds link cysteine 48/cysteine 96, cysteine 67/cysteine 86, cysteine 73/cysteine 91, and cysteine 77/cysteine 93.

The protein belongs to the DEFL family.

Its subcellular location is the secreted. This chain is Putative defensin-like protein 263, found in Arabidopsis thaliana (Mouse-ear cress).